A 213-amino-acid chain; its full sequence is Ribosomal RNA large subunit methyltransferase E (213 aa).

Residues Gly-60, Trp-62, Asp-80, Asp-96, and Asp-121 each contribute to the S-adenosyl-L-methionine site. Lys-161 functions as the Proton acceptor in the catalytic mechanism.

It belongs to the class I-like SAM-binding methyltransferase superfamily. RNA methyltransferase RlmE family.

It localises to the cytoplasm. The catalysed reaction is uridine(2552) in 23S rRNA + S-adenosyl-L-methionine = 2'-O-methyluridine(2552) in 23S rRNA + S-adenosyl-L-homocysteine + H(+). Its function is as follows. Specifically methylates the uridine in position 2552 of 23S rRNA at the 2'-O position of the ribose in the fully assembled 50S ribosomal subunit. The chain is Ribosomal RNA large subunit methyltransferase E from Xylella fastidiosa (strain 9a5c).